The sequence spans 133 residues: Putative pre-16S rRNA nuclease (133 aa).

This sequence belongs to the YqgF nuclease family.

The protein resides in the cytoplasm. Could be a nuclease involved in processing of the 5'-end of pre-16S rRNA. This is Putative pre-16S rRNA nuclease from Bordetella pertussis (strain Tohama I / ATCC BAA-589 / NCTC 13251).